Reading from the N-terminus, the 585-residue chain is Probable monoterpene synthase MTS1, chloroplastic (585 aa).

The disordered stretch occupies residues 1-29 (MSLSGVPLSAGLAPSPSNKPTNGKGQNIV). Residues 1 to 31 (MSLSGVPLSAGLAPSPSNKPTNGKGQNIVRR) constitute a chloroplast transit peptide. Residues 15–25 (SPSNKPTNGKG) are compositionally biased toward polar residues. R298, D335, D339, R476, and D479 together coordinate (2E)-geranyl diphosphate. The Mg(2+) site is built by D335 and D339. Positions 335 to 339 (DDIYD) match the DDXXD motif motif. Residues D479, T483, and E487 each coordinate Mg(2+).

This sequence belongs to the terpene synthase family. Tpsb subfamily. It depends on Mg(2+) as a cofactor. Mn(2+) serves as cofactor. In terms of tissue distribution, expressed in trichomes. Detected in flowers, but not in leaves.

It localises to the plastid. The protein resides in the chloroplast. This is Probable monoterpene synthase MTS1, chloroplastic from Humulus lupulus (European hop).